A 218-amino-acid polypeptide reads, in one-letter code: Large ribosomal subunit protein bL25 (218 aa).

Disordered stretches follow at residues 1–20 (MKTH…GPAR) and 185–218 (PTAA…ASEE). A compositionally biased stretch (acidic residues) spans 192–218 (EEGEEGEEGEEGGEGGEAEGAEAASEE).

The protein belongs to the bacterial ribosomal protein bL25 family. CTC subfamily. Part of the 50S ribosomal subunit; part of the 5S rRNA/L5/L18/L25 subcomplex. Contacts the 5S rRNA. Binds to the 5S rRNA independently of L5 and L18.

Its function is as follows. This is one of the proteins that binds to the 5S RNA in the ribosome where it forms part of the central protuberance. The protein is Large ribosomal subunit protein bL25 of Desulfatibacillum aliphaticivorans.